The primary structure comprises 362 residues: 3-isopropylmalate dehydrogenase (362 aa).

Residue 76–87 coordinates NAD(+); it reads GPKWGTGSVRPE. Substrate is bound by residues arginine 94, arginine 104, arginine 133, and aspartate 222. Mg(2+) contacts are provided by aspartate 222, aspartate 247, and aspartate 251. 286 to 297 provides a ligand contact to NAD(+); that stretch reads GSAPDLGPGKVN.

It belongs to the isocitrate and isopropylmalate dehydrogenases family. As to quaternary structure, homodimer. Mg(2+) serves as cofactor. Mn(2+) is required as a cofactor.

It is found in the cytoplasm. It carries out the reaction (2R,3S)-3-isopropylmalate + NAD(+) = 4-methyl-2-oxopentanoate + CO2 + NADH. It functions in the pathway amino-acid biosynthesis; L-leucine biosynthesis; L-leucine from 3-methyl-2-oxobutanoate: step 3/4. Functionally, catalyzes the oxidation of 3-carboxy-2-hydroxy-4-methylpentanoate (3-isopropylmalate) to 3-carboxy-4-methyl-2-oxopentanoate. The product decarboxylates to 4-methyl-2 oxopentanoate. The chain is 3-isopropylmalate dehydrogenase (LEU2) from Pichia angusta (Yeast).